Consider the following 241-residue polypeptide: Phosphoadenosine 5'-phosphosulfate reductase (241 aa).

The Nucleophile; cysteine thiosulfonate intermediate role is filled by Cys-235.

It belongs to the PAPS reductase family. CysH subfamily.

The protein resides in the cytoplasm. The catalysed reaction is [thioredoxin]-disulfide + sulfite + adenosine 3',5'-bisphosphate + 2 H(+) = [thioredoxin]-dithiol + 3'-phosphoadenylyl sulfate. Its pathway is sulfur metabolism; hydrogen sulfide biosynthesis; sulfite from sulfate: step 3/3. In terms of biological role, catalyzes the formation of sulfite from phosphoadenosine 5'-phosphosulfate (PAPS) using thioredoxin as an electron donor. This chain is Phosphoadenosine 5'-phosphosulfate reductase, found in Xanthomonas campestris pv. campestris (strain 8004).